Here is a 37-residue protein sequence, read N- to C-terminus: Large ribosomal subunit protein bL36A (37 aa).

It belongs to the bacterial ribosomal protein bL36 family.

The polypeptide is Large ribosomal subunit protein bL36A (Actinobacillus pleuropneumoniae serotype 3 (strain JL03)).